Consider the following 185-residue polypeptide: UPF0301 protein Shew_1144 (185 aa).

This sequence belongs to the UPF0301 (AlgH) family.

This chain is UPF0301 protein Shew_1144, found in Shewanella loihica (strain ATCC BAA-1088 / PV-4).